We begin with the raw amino-acid sequence, 156 residues long: Phosphopantetheine adenylyltransferase (156 aa).

Thr10 provides a ligand contact to substrate. Residues 10 to 11 and His18 each bind ATP; that span reads TF. Substrate is bound by residues Lys42, Leu74, and Arg88. ATP contacts are provided by residues 89–91, Glu99, and 124–130; these read GLR and NAFISSS.

It belongs to the bacterial CoaD family. Homohexamer. Mg(2+) serves as cofactor.

It is found in the cytoplasm. It catalyses the reaction (R)-4'-phosphopantetheine + ATP + H(+) = 3'-dephospho-CoA + diphosphate. Its pathway is cofactor biosynthesis; coenzyme A biosynthesis; CoA from (R)-pantothenate: step 4/5. Reversibly transfers an adenylyl group from ATP to 4'-phosphopantetheine, yielding dephospho-CoA (dPCoA) and pyrophosphate. In Campylobacter curvus (strain 525.92), this protein is Phosphopantetheine adenylyltransferase.